Consider the following 1279-residue polypeptide: Myosin-1 (1279 aa).

The segment covering 1 to 12 (MAIVKRGGRTRA) has biased composition (basic residues). Residues 1 to 25 (MAIVKRGGRTRAKQQQAPAKVNNGL) form a disordered region. Residues 48–736 (VGVSDLTLLS…TLFALEDMRD (689 aa)) enclose the Myosin motor domain. 141–148 (GESGAGKT) contributes to the ATP binding site. At Ser371 the chain carries Phosphoserine. An actin-binding region spans residues 419 to 502 (SIGILDIYGF…PGLFAALNDS (84 aa)). IQ domains follow at residues 740-760 (HNMA…KEDA) and 761-786 (AKTI…YGNS). In terms of domain architecture, TH1 spans 794 to 984 (RRRFSMLGSR…SGTVTVNQGL (191 aa)). Composition is skewed to polar residues over residues 980–989 (VNQGLPPTSK) and 1018–1027 (AFQSQPTASY). Disordered regions lie at residues 980–1001 (VNQG…LGKV), 1014–1132 (LAQP…PKHP), 1189–1216 (SPSA…SSNT), and 1253–1279 (LADA…DDDW). 2 stretches are compositionally biased toward low complexity: residues 1038-1056 (TQLY…PTRT) and 1067-1095 (STQT…KKIA). Over residues 1116–1126 (APPPPPPPPAL) the composition is skewed to pro residues. An SH3 domain is found at 1129–1189 (PKHPTYRAMY…PIDYLQEESS (61 aa)). Residues 1189–1209 (SPSASAATQSYAPTTASSNPV) show a composition bias toward polar residues. Acidic residues predominate over residues 1268–1279 (SDAEDDDDDDDW).

The protein belongs to the TRAFAC class myosin-kinesin ATPase superfamily. Myosin family. In terms of processing, phosphorylation of the TEDS site (Ser-371) is required for the polarization of the actin cytoskeleton. Phosphorylation probably activates the myosin-I ATPase activity.

It is found in the cytoplasm. The protein resides in the cytoskeleton. It localises to the actin patch. In terms of biological role, type-I myosin implicated in the organization of the actin cytoskeleton. Required for proper actin cytoskeleton polarization. At the cell cortex, assembles in patch-like structures together with proteins from the actin-polymerizing machinery and promotes actin assembly. Functions as actin nucleation-promoting factor (NPF) for the Arp2/3 complex. The chain is Myosin-1 (MYO1) from Lodderomyces elongisporus (strain ATCC 11503 / CBS 2605 / JCM 1781 / NBRC 1676 / NRRL YB-4239) (Yeast).